A 301-amino-acid polypeptide reads, in one-letter code: Probable 5-dehydro-4-deoxyglucarate dehydratase (301 aa).

The protein belongs to the DapA family.

It carries out the reaction 5-dehydro-4-deoxy-D-glucarate + H(+) = 2,5-dioxopentanoate + CO2 + H2O. It functions in the pathway carbohydrate acid metabolism; D-glucarate degradation; 2,5-dioxopentanoate from D-glucarate: step 2/2. The chain is Probable 5-dehydro-4-deoxyglucarate dehydratase from Xanthobacter autotrophicus (strain ATCC BAA-1158 / Py2).